Here is a 302-residue protein sequence, read N- to C-terminus: Nucleoside kinase (302 aa).

4 residues coordinate substrate: Asp-17, Gln-33, Gly-43, and Asn-47. An ATP-binding site is contributed by Gln-109. Residues 111–113 (TFF) and Gln-163 contribute to the substrate site. Residues Asn-186 and 214–219 (TKGSKG) each bind ATP. Position 247 (Asp-247) interacts with substrate. The active-site Proton acceptor is the Asp-247.

In terms of assembly, homodimer. It depends on Mg(2+) as a cofactor. Mn(2+) is required as a cofactor.

It carries out the reaction cytidine + ATP = CMP + ADP + H(+). The enzyme catalyses guanosine + ATP = GMP + ADP + H(+). It catalyses the reaction inosine + ATP = IMP + ADP + H(+). In terms of biological role, catalyzes the phosphorylation of a wide range of nucleosides to yield nucleoside monophosphates. Shows the highest activity for inosine, guanosine and cytidine, but very poor kinase activity with adenosine, thymidine, uridine and xanthosine. ATP is the best phosphate donor, but can also use ITP and GTP. Shows extremely low activity with fructose-6-phosphate. This Methanocaldococcus jannaschii (strain ATCC 43067 / DSM 2661 / JAL-1 / JCM 10045 / NBRC 100440) (Methanococcus jannaschii) protein is Nucleoside kinase.